The chain runs to 397 residues: tRNA pseudouridine synthase D (397 aa).

Asp76 serves as the catalytic Nucleophile. Residues 151-361 form the TRUD domain; that stretch reads GVPNFFGEQR…MEGERRPLRV (211 aa).

Belongs to the pseudouridine synthase TruD family.

The catalysed reaction is uridine(13) in tRNA = pseudouridine(13) in tRNA. Responsible for synthesis of pseudouridine from uracil-13 in transfer RNAs. This Geotalea daltonii (strain DSM 22248 / JCM 15807 / FRC-32) (Geobacter daltonii) protein is tRNA pseudouridine synthase D.